A 202-amino-acid polypeptide reads, in one-letter code: Adenylyl-sulfate kinase (202 aa).

Residue 31-38 (GLSASGKS) participates in ATP binding. The active-site Phosphoserine intermediate is Ser105.

The protein belongs to the APS kinase family.

It catalyses the reaction adenosine 5'-phosphosulfate + ATP = 3'-phosphoadenylyl sulfate + ADP + H(+). Its pathway is sulfur metabolism; hydrogen sulfide biosynthesis; sulfite from sulfate: step 2/3. In terms of biological role, catalyzes the synthesis of activated sulfate. The protein is Adenylyl-sulfate kinase (MET14) of Saccharomyces pastorianus (Lager yeast).